Consider the following 347-residue polypeptide: MNPMIFIILLGTIMLGTSIVMTSSHWFLTWLGFEMNMMAVIPVLMKKYSPRSMEAATKYFLTQATASMILMLAIIINLMFSGQWTITNMDNFTASMLLTTALVMKLGLAPFHFWVPEVTQGVSLNSGLILLTWQKIAPLSLLYQIYPSINTNLLLIMSLLSIMIGGWGGLNQTQLRKIMAYSSIAHMGWMMAIMIYNPNLSLLNLFIYILMTSSMFMLLIFASTTSMLSLSLTWNKTPIITIMSLMVLLSLGGLPPLTGFMPKWMIIQELTKNNSVILPTLMAILALLNLFFYMRLTYSSALTMFPTMNNTKLTWQYQNTNILPMMMPLITMSTLALPLTPLFILLN.

The next 11 membrane-spanning stretches (helical) occupy residues 1–21 (MNPM…SIVM), 25–45 (HWFL…PVLM), 60–80 (FLTQ…NLMF), 96–116 (MLLT…FWVP), 127–147 (GLIL…QIYP), 149–169 (INTN…GWGG), 178–198 (IMAY…IYNP), 202–222 (LLNL…LIFA), 239–259 (IITI…PLTG), 274–294 (NSVI…FFYM), and 326–346 (MMPL…FILL).

This sequence belongs to the complex I subunit 2 family. Core subunit of respiratory chain NADH dehydrogenase (Complex I) which is composed of 45 different subunits. Interacts with TMEM242.

It is found in the mitochondrion inner membrane. The enzyme catalyses a ubiquinone + NADH + 5 H(+)(in) = a ubiquinol + NAD(+) + 4 H(+)(out). Core subunit of the mitochondrial membrane respiratory chain NADH dehydrogenase (Complex I) that is believed to belong to the minimal assembly required for catalysis. Complex I functions in the transfer of electrons from NADH to the respiratory chain. The immediate electron acceptor for the enzyme is believed to be ubiquinone. This chain is NADH-ubiquinone oxidoreductase chain 2, found in Suncus etruscus (Etruscan shrew).